A 560-amino-acid chain; its full sequence is Membrane protein insertase YidC (560 aa).

6 helical membrane-spanning segments follow: residues 5-25, 334-354, 357-377, 431-451, 476-496, and 522-542; these read IINL…WQYF, AIDF…MNFF, YVGN…LLMF, LPIL…YVTI, LFGL…WPIL, and FMPL…LIYW.

Belongs to the OXA1/ALB3/YidC family. Type 1 subfamily. In terms of assembly, interacts with the Sec translocase complex via SecD. Specifically interacts with transmembrane segments of nascent integral membrane proteins during membrane integration.

It localises to the cell inner membrane. Required for the insertion and/or proper folding and/or complex formation of integral membrane proteins into the membrane. Involved in integration of membrane proteins that insert both dependently and independently of the Sec translocase complex, as well as at least some lipoproteins. Aids folding of multispanning membrane proteins. The chain is Membrane protein insertase YidC from Rickettsia rickettsii (strain Iowa).